Here is a 117-residue protein sequence, read N- to C-terminus: Prefoldin subunit beta (117 aa).

This sequence belongs to the prefoldin subunit beta family. In terms of assembly, heterohexamer of two alpha and four beta subunits.

The protein resides in the cytoplasm. Its function is as follows. Molecular chaperone capable of stabilizing a range of proteins. Seems to fulfill an ATP-independent, HSP70-like function in archaeal de novo protein folding. The protein is Prefoldin subunit beta of Thermococcus gammatolerans (strain DSM 15229 / JCM 11827 / EJ3).